Consider the following 414-residue polypeptide: Probable sugar phosphate/phosphate translocator At1g06470 (414 aa).

Helical transmembrane passes span 72-92 (VLKT…LTLY), 101-121 (LGKF…QAVL), 172-192 (TFAT…AFAF), 197-217 (PSLK…LTVA), 224-244 (FWGF…WCMT), 259-279 (FIFM…LSLL), 303-323 (FLML…YVLV), 328-348 (AVTV…VAVF), and 354-374 (FTWL…LFNW). Residues 106-216 (APLLMNTIHF…VISAGVLLTV (111 aa)) form the EamA domain.

It belongs to the TPT transporter family. TPT (TC 2.A.7.9) subfamily.

The protein localises to the membrane. In Arabidopsis thaliana (Mouse-ear cress), this protein is Probable sugar phosphate/phosphate translocator At1g06470.